The primary structure comprises 180 residues: tRNA (cytidine(56)-2'-O)-methyltransferase (180 aa).

Leucine 85 is a binding site for S-adenosyl-L-methionine.

The protein belongs to the aTrm56 family. As to quaternary structure, homodimer.

The protein localises to the cytoplasm. It carries out the reaction cytidine(56) in tRNA + S-adenosyl-L-methionine = 2'-O-methylcytidine(56) in tRNA + S-adenosyl-L-homocysteine + H(+). Its function is as follows. Specifically catalyzes the AdoMet-dependent 2'-O-ribose methylation of cytidine at position 56 in tRNAs. The chain is tRNA (cytidine(56)-2'-O)-methyltransferase from Methanobrevibacter smithii (strain ATCC 35061 / DSM 861 / OCM 144 / PS).